Consider the following 412-residue polypeptide: NADH-quinone oxidoreductase subunit D (412 aa).

The protein belongs to the complex I 49 kDa subunit family. As to quaternary structure, NDH-1 is composed of 14 different subunits. Subunits NuoB, C, D, E, F, and G constitute the peripheral sector of the complex.

It is found in the cell inner membrane. It carries out the reaction a quinone + NADH + 5 H(+)(in) = a quinol + NAD(+) + 4 H(+)(out). Functionally, NDH-1 shuttles electrons from NADH, via FMN and iron-sulfur (Fe-S) centers, to quinones in the respiratory chain. The immediate electron acceptor for the enzyme in this species is believed to be a menaquinone. Couples the redox reaction to proton translocation (for every two electrons transferred, four hydrogen ions are translocated across the cytoplasmic membrane), and thus conserves the redox energy in a proton gradient. This chain is NADH-quinone oxidoreductase subunit D, found in Flavobacterium psychrophilum (strain ATCC 49511 / DSM 21280 / CIP 103535 / JIP02/86).